Reading from the N-terminus, the 361-residue chain is 3-dehydroquinate synthase (361 aa).

Residues 72–77 (SGEKEK), 130–131 (TT), Lys-142, and Lys-151 contribute to the NAD(+) site. Zn(2+)-binding residues include Glu-184, His-247, and His-264.

The protein belongs to the sugar phosphate cyclases superfamily. Dehydroquinate synthase family. Requires Co(2+) as cofactor. Zn(2+) serves as cofactor. It depends on NAD(+) as a cofactor.

It is found in the cytoplasm. It catalyses the reaction 7-phospho-2-dehydro-3-deoxy-D-arabino-heptonate = 3-dehydroquinate + phosphate. The protein operates within metabolic intermediate biosynthesis; chorismate biosynthesis; chorismate from D-erythrose 4-phosphate and phosphoenolpyruvate: step 2/7. Functionally, catalyzes the conversion of 3-deoxy-D-arabino-heptulosonate 7-phosphate (DAHP) to dehydroquinate (DHQ). This is 3-dehydroquinate synthase from Bacillus cereus (strain B4264).